The primary structure comprises 375 residues: DNA replication and repair protein RecF (375 aa).

30-37 is an ATP binding site; sequence GDNAQGKS.

It belongs to the RecF family.

It is found in the cytoplasm. Functionally, the RecF protein is involved in DNA metabolism; it is required for DNA replication and normal SOS inducibility. RecF binds preferentially to single-stranded, linear DNA. It also seems to bind ATP. This Gloeobacter violaceus (strain ATCC 29082 / PCC 7421) protein is DNA replication and repair protein RecF.